A 609-amino-acid polypeptide reads, in one-letter code: UvrABC system protein C (609 aa).

Residues 16-94 enclose the GIY-YIG domain; that stretch reads SSAGVYRMYD…IKQYMPKYNV (79 aa). A UVR domain is found at 203–238; sequence QQVISALVDKMELAAERQAYEQAARFRDQIMALRKV.

It belongs to the UvrC family. Interacts with UvrB in an incision complex.

It is found in the cytoplasm. Its function is as follows. The UvrABC repair system catalyzes the recognition and processing of DNA lesions. UvrC both incises the 5' and 3' sides of the lesion. The N-terminal half is responsible for the 3' incision and the C-terminal half is responsible for the 5' incision. The chain is UvrABC system protein C from Shewanella baltica (strain OS155 / ATCC BAA-1091).